A 457-amino-acid polypeptide reads, in one-letter code: Aromatic amino acid transport protein AroP (457 aa).

Residues 1–19 (MMEGQQHGEQLKRGLKNRH) are Cytoplasmic-facing. The helical transmembrane segment at 20-40 (IQLIALGGAIGTGLFLGSASV) threads the bilayer. The Periplasmic segment spans residues 41–42 (IQ). The helical transmembrane segment at 43–63 (SAGPGIILGYAIAGFIAFLIM) threads the bilayer. At 64–86 (RQLGEMVVEEPVAGSFSHFAYKY) the chain is on the cytoplasmic side. A helical membrane pass occupies residues 87–107 (WGSFAGFASGWNYWVLYVLVA). The Periplasmic segment spans residues 108–117 (MAELTAVGKY). Residues 118–138 (IQFWYPEIPTWVSAAVFFVVI) form a helical membrane-spanning segment. Topologically, residues 139–155 (NAINLTNVKVFGEMEFW) are cytoplasmic. A helical transmembrane segment spans residues 156–176 (FAIIKVIAVVAMIIFGGWLLF). Topologically, residues 177 to 201 (SGNGGPQASVSNLWDQGGFLPHGFT) are periplasmic. Residues 202–222 (GLVMMMAIIMFSFGGLELVGI) traverse the membrane as a helical segment. The Cytoplasmic portion of the chain corresponds to 223–240 (TAAEADNPEQSIPKATNQ). A helical membrane pass occupies residues 241–261 (VIYRILIFYIGSLAVLLSLMP). Residues 262-271 (WTRVTADTSP) lie on the Periplasmic side of the membrane. The chain crosses the membrane as a helical span at residues 272–292 (FVLIFHELGDTFVANALNIVV). At 293–333 (LTAALSVYNSCVYCNSRMLFGLAQQGNAPKALASVDKRGVP) the chain is on the cytoplasmic side. A helical membrane pass occupies residues 334 to 354 (VNTILVSALVTALCVLINYLA). Residues 355 to 358 (PESA) are Periplasmic-facing. The chain crosses the membrane as a helical span at residues 359 to 379 (FGLLMALVVSALVINWAMISL). Residues 380 to 399 (AHMKFRRAKQEQGVVTRFPA) lie on the Cytoplasmic side of the membrane. A helical membrane pass occupies residues 400-420 (LLYPLGNWICLLFMAAVLVIM). The Periplasmic portion of the chain corresponds to 421 to 425 (LMTPG). A helical transmembrane segment spans residues 426-446 (MAISVYLIPVWLIVLGIGYLF). At 447 to 457 (KEKTAKAVKAH) the chain is on the cytoplasmic side.

This sequence belongs to the amino acid-polyamine-organocation (APC) superfamily. Amino acid transporter (AAT) (TC 2.A.3.1) family.

It is found in the cell inner membrane. The catalysed reaction is L-phenylalanine(in) + H(+)(in) = L-phenylalanine(out) + H(+)(out). It catalyses the reaction L-tryptophan(in) + H(+)(in) = L-tryptophan(out) + H(+)(out). It carries out the reaction L-tyrosine(in) + H(+)(in) = L-tyrosine(out) + H(+)(out). Functionally, permease that is involved in the active transport across the cytoplasmic membrane of all three aromatic amino acids, phenylalanine, tyrosine and tryptophan. The chain is Aromatic amino acid transport protein AroP (aroP) from Shigella flexneri.